The primary structure comprises 84 residues: Sulfur carrier protein TusA (84 aa).

Cys-19 acts as the Cysteine persulfide intermediate in catalysis.

The protein belongs to the sulfur carrier protein TusA family. As to quaternary structure, interacts with IscS.

The protein localises to the cytoplasm. It functions in the pathway tRNA modification. Sulfur carrier protein involved in sulfur trafficking in the cell. Part of a sulfur-relay system required for 2-thiolation during synthesis of 2-thiouridine of the modified wobble base 5-methylaminomethyl-2-thiouridine (mnm(5)s(2)U) in tRNA. Interacts with IscS and stimulates its cysteine desulfurase activity. Accepts an activated sulfur from IscS, which is then transferred to TusD, and thus determines the direction of sulfur flow from IscS to 2-thiouridine formation. Also appears to be involved in sulfur transfer for the biosynthesis of molybdopterin. The protein is Sulfur carrier protein TusA of Yersinia pseudotuberculosis serotype O:1b (strain IP 31758).